The sequence spans 123 residues: F-box protein PP2-B3 (123 aa).

An F-box domain is found at 10–56 (PSPFDGLPENCISNIISFTTPRDACFAASVSKAFESAVQSDSVWEKF).

This chain is F-box protein PP2-B3 (PP2B3), found in Arabidopsis thaliana (Mouse-ear cress).